A 292-amino-acid chain; its full sequence is ATP synthase gamma chain (292 aa).

This sequence belongs to the ATPase gamma chain family. In terms of assembly, F-type ATPases have 2 components, CF(1) - the catalytic core - and CF(0) - the membrane proton channel. CF(1) has five subunits: alpha(3), beta(3), gamma(1), delta(1), epsilon(1). CF(0) has three main subunits: a, b and c.

The protein localises to the cell inner membrane. Functionally, produces ATP from ADP in the presence of a proton gradient across the membrane. The gamma chain is believed to be important in regulating ATPase activity and the flow of protons through the CF(0) complex. The chain is ATP synthase gamma chain from Chlorobaculum tepidum (strain ATCC 49652 / DSM 12025 / NBRC 103806 / TLS) (Chlorobium tepidum).